Consider the following 355-residue polypeptide: Capsular polysaccharide biosynthesis glycosyltransferase CapH (355 aa).

The protein belongs to the glycosyltransferase group 1 family. Glycosyltransferase 4 subfamily.

Its pathway is capsule biogenesis; capsule polysaccharide biosynthesis. In terms of biological role, required for the biosynthesis of type 1 capsular polysaccharide. In Staphylococcus aureus, this protein is Capsular polysaccharide biosynthesis glycosyltransferase CapH (capH).